The primary structure comprises 423 residues: 3-isopropylmalate dehydratase large subunit 1 (423 aa).

[4Fe-4S] cluster is bound by residues C302, C362, and C365.

Belongs to the aconitase/IPM isomerase family. LeuC type 2 subfamily. In terms of assembly, heterodimer of LeuC and LeuD. Requires [4Fe-4S] cluster as cofactor.

It catalyses the reaction (2R,3S)-3-isopropylmalate = (2S)-2-isopropylmalate. It participates in amino-acid biosynthesis; L-leucine biosynthesis; L-leucine from 3-methyl-2-oxobutanoate: step 2/4. In terms of biological role, catalyzes the isomerization between 2-isopropylmalate and 3-isopropylmalate, via the formation of 2-isopropylmaleate. The protein is 3-isopropylmalate dehydratase large subunit 1 of Pyrococcus abyssi (strain GE5 / Orsay).